Here is an 86-residue protein sequence, read N- to C-terminus: ATP synthase subunit c (86 aa).

2 consecutive transmembrane segments (helical) span residues 8–28 and 64–84; these read VLGC…GPGI and TTGL…PLLG.

Belongs to the ATPase C chain family. As to quaternary structure, F-type ATPases have 2 components, F(1) - the catalytic core - and F(0) - the membrane proton channel. F(1) has five subunits: alpha(3), beta(3), gamma(1), delta(1), epsilon(1). F(0) has three main subunits: a(1), b(2) and c(10-14). The alpha and beta chains form an alternating ring which encloses part of the gamma chain. F(1) is attached to F(0) by a central stalk formed by the gamma and epsilon chains, while a peripheral stalk is formed by the delta and b chains.

Its subcellular location is the cell membrane. Its function is as follows. F(1)F(0) ATP synthase produces ATP from ADP in the presence of a proton or sodium gradient. F-type ATPases consist of two structural domains, F(1) containing the extramembraneous catalytic core and F(0) containing the membrane proton channel, linked together by a central stalk and a peripheral stalk. During catalysis, ATP synthesis in the catalytic domain of F(1) is coupled via a rotary mechanism of the central stalk subunits to proton translocation. Functionally, key component of the F(0) channel; it plays a direct role in translocation across the membrane. A homomeric c-ring of between 10-14 subunits forms the central stalk rotor element with the F(1) delta and epsilon subunits. The polypeptide is ATP synthase subunit c (Lachnoclostridium phytofermentans (strain ATCC 700394 / DSM 18823 / ISDg) (Clostridium phytofermentans)).